The following is a 396-amino-acid chain: Cathepsin E (396 aa).

Positions 1 to 19 are cleaved as a signal peptide; it reads MKTLLLLLLVLLELGEAQG. A propeptide spans 20–53 (activation peptide); sequence SLHRVPLRRHPSLKKKLRARSQLSEFWKSHNLDM. In terms of domain architecture, Peptidase A1 spans 78–396; that stretch reads YFGTISIGSP…NRVGLAPAVP (319 aa). An N-linked (GlcNAc...) asparagine glycan is attached at asparagine 90. Residue aspartate 96 is part of the active site. Disulfide bonds link cysteine 109–cysteine 114 and cysteine 272–cysteine 276. The active site involves aspartate 281. Cysteine 314 and cysteine 351 are oxidised to a cystine.

This sequence belongs to the peptidase A1 family. Homodimer; disulfide-linked. In terms of processing, glycosylated. The nature of the carbohydrate chain varies between cell types. In fibroblasts, the proenzyme contains a high mannose-type oligosaccharide, while the mature enzyme contains a complex-type oligosaccharide. In erythrocyte membranes, both the proenzyme and mature enzyme contain a complex-type oligosaccharide. Post-translationally, two forms are produced by autocatalytic cleavage, form I begins at Ile-54, form II begins at Thr-57. As to expression, expressed abundantly in the stomach, the Clara cells of the lung and activated B-lymphocytes, and at lower levels in lymph nodes, skin and spleen. Not expressed in resting B-lymphocytes.

It is found in the endosome. The catalysed reaction is Similar to cathepsin D, but slightly broader specificity.. Functionally, may have a role in immune function. Probably involved in the processing of antigenic peptides during MHC class II-mediated antigen presentation. May play a role in activation-induced lymphocyte depletion in the thymus, and in neuronal degeneration and glial cell activation in the brain. This Homo sapiens (Human) protein is Cathepsin E (CTSE).